Here is a 354-residue protein sequence, read N- to C-terminus: Guanine nucleotide-binding protein G(t) subunit alpha-2 (354 aa).

The disordered stretch occupies residues 1-27 (MGSGASAEDKELAKRSKELEKKLQEDA). The N-myristoyl glycine moiety is linked to residue glycine 2. Basic and acidic residues predominate over residues 7-27 (AEDKELAKRSKELEKKLQEDA). The 323-residue stretch at 32–354 (KTVKLLLLGA…KENLKDCGLF (323 aa)) folds into the G-alpha domain. Residues 35-48 (KLLLLGAGESGKST) are G1 motif. Residues 40–47 (GAGESGKS), 175–181 (LRSRVKT), 200–204 (DVGGQ), 269–272 (NKKD), and alanine 326 each bind GTP. Mg(2+) is bound at residue serine 47. The interval 173-181 (DVLRSRVKT) is G2 motif. Arginine 178 carries the post-translational modification ADP-ribosylarginine; by cholera toxin. Residue threonine 181 coordinates Mg(2+). The G3 motif stretch occupies residues 196–205 (FRMFDVGGQR). A G4 motif region spans residues 265–272 (VLFLNKKD). The segment at 324-329 (TCATDT) is G5 motif. Residue cysteine 351 is modified to ADP-ribosylcysteine; by pertussis toxin.

Belongs to the G-alpha family. G(i/o/t/z) subfamily. G proteins are composed of 3 units; alpha, beta and gamma. The alpha chain contains the guanine nucleotide binding site. Retinal rod outer segment.

It localises to the cell projection. The protein localises to the cilium. It is found in the photoreceptor outer segment. Its subcellular location is the photoreceptor inner segment. Its function is as follows. Guanine nucleotide-binding proteins (G proteins) are involved as modulators or transducers in various transmembrane signaling systems. Transducin is an amplifier and one of the transducers of a visual impulse that performs the coupling between rhodopsin and cGMP-phosphodiesterase. This Homo sapiens (Human) protein is Guanine nucleotide-binding protein G(t) subunit alpha-2 (GNAT2).